The following is a 370-amino-acid chain: MEGLKVTPLRGVYEEYGGKIVDFAGYELPTQFKGFLHEHHTVREKAGLFDVSHMGEAMVTGKDAGKFIQYLMTNDINVLKDNEVLYTFMCNEDGGVIDDLLVYKFAEDEFFLVINASNKDKDVKWIMDHKGDFDVEIVDVSDSIAQLAFQGPLAEEILQKIVDVDLQEIKFFKLKRDVLVDGKKCLVSRTGYTGEDGFEIYCKPEDAKELWHAILNAGKEEGAQPIGLGARDTLRFEASLLLYGNEMDETITPLEVGMGFFVKLKVEEDFIGKDALIKQKAEGVTRKLVGFELLDKGIPRHGYEVIKDGKVIGHVTTGYKSPTLNKAIGLALVEEQYSKIGTEFNIKVRKKKLKAVAIDKRFYTKKTKTK.

This sequence belongs to the GcvT family. The glycine cleavage system is composed of four proteins: P, T, L and H.

The catalysed reaction is N(6)-[(R)-S(8)-aminomethyldihydrolipoyl]-L-lysyl-[protein] + (6S)-5,6,7,8-tetrahydrofolate = N(6)-[(R)-dihydrolipoyl]-L-lysyl-[protein] + (6R)-5,10-methylene-5,6,7,8-tetrahydrofolate + NH4(+). Functionally, the glycine cleavage system catalyzes the degradation of glycine. This is Aminomethyltransferase from Clostridium botulinum (strain Kyoto / Type A2).